Consider the following 288-residue polypeptide: Quinate/shikimate dehydrogenase (288 aa).

Substrate is bound by residues Lys71 and Asp107. NAD(+)-binding positions include 132–135 (AGGA), 155–158 (NRKD), Lys205, 232–235 (CVYN), and Gly255.

This sequence belongs to the shikimate dehydrogenase family. As to quaternary structure, homodimer.

It catalyses the reaction L-quinate + NAD(+) = 3-dehydroquinate + NADH + H(+). The catalysed reaction is L-quinate + NADP(+) = 3-dehydroquinate + NADPH + H(+). The enzyme catalyses shikimate + NADP(+) = 3-dehydroshikimate + NADPH + H(+). It carries out the reaction shikimate + NAD(+) = 3-dehydroshikimate + NADH + H(+). It functions in the pathway metabolic intermediate biosynthesis; chorismate biosynthesis; chorismate from D-erythrose 4-phosphate and phosphoenolpyruvate: step 4/7. In terms of biological role, the actual biological function of YdiB remains unclear, nor is it known whether 3-dehydroshikimate or quinate represents the natural substrate. Catalyzes the reversible NAD-dependent reduction of both 3-dehydroshikimate (DHSA) and 3-dehydroquinate to yield shikimate (SA) and quinate, respectively. It can use both NAD or NADP for catalysis, however it has higher catalytic efficiency with NAD. In Salmonella agona (strain SL483), this protein is Quinate/shikimate dehydrogenase.